The primary structure comprises 206 residues: MSKGINPPKGGGTMEGRYMSQAHELLTNTGVENMANRTAERMIPLMNSLVTGYSIALAKTLGSGAGAMTQILLSEIGEVLSAMVDEILGSGQASYELENVEELLKNAFLELGIAKDVKIEKNIKDNMVIYKLYIKGSLFAPVHKILIDRGLKEFPLSPEGLLAASIVRRVLRERKDGNTKARINVNTKLPVNGETLIVEIKEVGSL.

This is an uncharacterized protein from Methanocaldococcus jannaschii (strain ATCC 43067 / DSM 2661 / JAL-1 / JCM 10045 / NBRC 100440) (Methanococcus jannaschii).